The primary structure comprises 305 residues: Oxygen-dependent coproporphyrinogen-III oxidase (305 aa).

Substrate is bound at residue serine 93. Histidine 97 and histidine 107 together coordinate a divalent metal cation. Histidine 107 (proton donor) is an active-site residue. A substrate-binding site is contributed by 109-111 (NVR). Residues histidine 146 and histidine 176 each coordinate a divalent metal cation. Residues 241–276 (YVEFNLVFDRGTLFGLQSGGRTESILMSLPPQVRWG) are important for dimerization. A substrate-binding site is contributed by 259–261 (GGR).

It belongs to the aerobic coproporphyrinogen-III oxidase family. As to quaternary structure, homodimer. It depends on a divalent metal cation as a cofactor.

It localises to the cytoplasm. It catalyses the reaction coproporphyrinogen III + O2 + 2 H(+) = protoporphyrinogen IX + 2 CO2 + 2 H2O. It participates in porphyrin-containing compound metabolism; protoporphyrin-IX biosynthesis; protoporphyrinogen-IX from coproporphyrinogen-III (O2 route): step 1/1. Its function is as follows. Involved in the heme biosynthesis. Catalyzes the aerobic oxidative decarboxylation of propionate groups of rings A and B of coproporphyrinogen-III to yield the vinyl groups in protoporphyrinogen-IX. This Pseudomonas paraeruginosa (strain DSM 24068 / PA7) (Pseudomonas aeruginosa (strain PA7)) protein is Oxygen-dependent coproporphyrinogen-III oxidase.